The primary structure comprises 397 residues: Enoyl-[acyl-carrier-protein] reductase [NADH] (397 aa).

NAD(+) is bound by residues 48-53 (GASTGY), 74-75 (FE), 111-112 (DA), and 139-140 (LA). Residue Y225 coordinates substrate. The active-site Proton donor is Y235. NAD(+) contacts are provided by residues K244 and 273–275 (VVT).

Belongs to the TER reductase family. In terms of assembly, monomer.

It carries out the reaction a 2,3-saturated acyl-[ACP] + NAD(+) = a (2E)-enoyl-[ACP] + NADH + H(+). It participates in lipid metabolism; fatty acid biosynthesis. Functionally, involved in the final reduction of the elongation cycle of fatty acid synthesis (FAS II). Catalyzes the reduction of a carbon-carbon double bond in an enoyl moiety that is covalently linked to an acyl carrier protein (ACP). The protein is Enoyl-[acyl-carrier-protein] reductase [NADH] of Edwardsiella ictaluri (strain 93-146).